A 405-amino-acid chain; its full sequence is MKKVIKKIALAYSGGLDTSIMIPWLKEHYEHAEVIAVICDLGQQEDLDTIKNKALKSGASKAYVVDVKNEFAIQYLWPLVKSGALYEDQYILGTISRPLIAQKLVEIALTEQVNAVAHGATGKGNDQVRFEYSIKALAPQLEIIAPWRTWDIKSRQEAIVYAKAHGIEVPVTPKAPYSRDHNIWYISHEGGVLEDPSQEMPDDVLLMTAPVSQTPDEEEVVVLDFKKGVPVALNGQELSPVDLLNSLNQKAGQHGIGVADIVENRLVGMKIRGIYEAPAAAVLYKAHKLLESLCLTRSTLHLKQSLQQTYANLVYEGRWFSQTKQALDAFIDVTQQHVTGCVKLKLFKGNIIPAGMHSPYSLHHPELATFEEDNVYNQKDAEGFINLFSLSAKIYSQVHQEGNYD.

11–19 (AYSGGLDTS) provides a ligand contact to ATP. Tyr90 contributes to the L-citrulline binding site. Gly119 lines the ATP pocket. Residues Thr121, Asn125, and Asp126 each coordinate L-aspartate. Asn125 is a binding site for L-citrulline. The L-citrulline site is built by Arg129, Ser178, Ser187, Glu263, and Tyr275.

The protein belongs to the argininosuccinate synthase family. Type 1 subfamily. Homotetramer.

The protein resides in the cytoplasm. It carries out the reaction L-citrulline + L-aspartate + ATP = 2-(N(omega)-L-arginino)succinate + AMP + diphosphate + H(+). It functions in the pathway amino-acid biosynthesis; L-arginine biosynthesis; L-arginine from L-ornithine and carbamoyl phosphate: step 2/3. The protein is Argininosuccinate synthase of Legionella pneumophila (strain Corby).